The primary structure comprises 388 residues: Riboflavin biosynthesis protein RibBA (388 aa).

A DHBP synthase region spans residues 1–186 (MEELREAFEE…MDDVWREFVK (186 aa)). D-ribulose 5-phosphate is bound by residues 21-22 (RE), D26, 125-129 (RKGHT), and E149. Residue E22 coordinates Mg(2+). H128 provides a ligand contact to Mg(2+). Residues 187-388 (RKLLMKKKAE…LEEIFREVNS (202 aa)) are GTP cyclohydrolase II. 235-239 (RIHSE) provides a ligand contact to GTP. Positions 240, 251, and 253 each coordinate Zn(2+). GTP contacts are provided by residues Q256, 277-279 (EGR), and T299. The active-site Proton acceptor; for GTP cyclohydrolase activity is D311. Catalysis depends on R313, which acts as the Nucleophile; for GTP cyclohydrolase activity. T334 and K339 together coordinate GTP.

It in the N-terminal section; belongs to the DHBP synthase family. In the C-terminal section; belongs to the GTP cyclohydrolase II family. Mg(2+) is required as a cofactor. The cofactor is Mn(2+). Zn(2+) serves as cofactor.

The enzyme catalyses D-ribulose 5-phosphate = (2S)-2-hydroxy-3-oxobutyl phosphate + formate + H(+). It carries out the reaction GTP + 4 H2O = 2,5-diamino-6-hydroxy-4-(5-phosphoribosylamino)-pyrimidine + formate + 2 phosphate + 3 H(+). It functions in the pathway cofactor biosynthesis; riboflavin biosynthesis; 2-hydroxy-3-oxobutyl phosphate from D-ribulose 5-phosphate: step 1/1. Its pathway is cofactor biosynthesis; riboflavin biosynthesis; 5-amino-6-(D-ribitylamino)uracil from GTP: step 1/4. Functionally, catalyzes the conversion of D-ribulose 5-phosphate to formate and 3,4-dihydroxy-2-butanone 4-phosphate. Its function is as follows. Catalyzes the conversion of GTP to 2,5-diamino-6-ribosylamino-4(3H)-pyrimidinone 5'-phosphate (DARP), formate and pyrophosphate. This Thermotoga maritima (strain ATCC 43589 / DSM 3109 / JCM 10099 / NBRC 100826 / MSB8) protein is Riboflavin biosynthesis protein RibBA.